A 594-amino-acid chain; its full sequence is Proline--tRNA ligase (594 aa).

Belongs to the class-II aminoacyl-tRNA synthetase family. ProS type 1 subfamily. In terms of assembly, homodimer.

The protein resides in the cytoplasm. It carries out the reaction tRNA(Pro) + L-proline + ATP = L-prolyl-tRNA(Pro) + AMP + diphosphate. Functionally, catalyzes the attachment of proline to tRNA(Pro) in a two-step reaction: proline is first activated by ATP to form Pro-AMP and then transferred to the acceptor end of tRNA(Pro). As ProRS can inadvertently accommodate and process non-cognate amino acids such as alanine and cysteine, to avoid such errors it has two additional distinct editing activities against alanine. One activity is designated as 'pretransfer' editing and involves the tRNA(Pro)-independent hydrolysis of activated Ala-AMP. The other activity is designated 'posttransfer' editing and involves deacylation of mischarged Ala-tRNA(Pro). The misacylated Cys-tRNA(Pro) is not edited by ProRS. This is Proline--tRNA ligase from Synechococcus sp. (strain WH7803).